The chain runs to 393 residues: Arginine biosynthesis bifunctional protein ArgJ (393 aa).

Substrate-binding residues include Thr143, Lys168, Thr179, Glu265, Asn388, and Thr393. Catalysis depends on Thr179, which acts as the Nucleophile.

The protein belongs to the ArgJ family. In terms of assembly, heterotetramer of two alpha and two beta chains.

Its subcellular location is the cytoplasm. It catalyses the reaction N(2)-acetyl-L-ornithine + L-glutamate = N-acetyl-L-glutamate + L-ornithine. The enzyme catalyses L-glutamate + acetyl-CoA = N-acetyl-L-glutamate + CoA + H(+). It functions in the pathway amino-acid biosynthesis; L-arginine biosynthesis; L-ornithine and N-acetyl-L-glutamate from L-glutamate and N(2)-acetyl-L-ornithine (cyclic): step 1/1. The protein operates within amino-acid biosynthesis; L-arginine biosynthesis; N(2)-acetyl-L-ornithine from L-glutamate: step 1/4. Its function is as follows. Catalyzes two activities which are involved in the cyclic version of arginine biosynthesis: the synthesis of N-acetylglutamate from glutamate and acetyl-CoA as the acetyl donor, and of ornithine by transacetylation between N(2)-acetylornithine and glutamate. The chain is Arginine biosynthesis bifunctional protein ArgJ from Syntrophotalea carbinolica (strain DSM 2380 / NBRC 103641 / GraBd1) (Pelobacter carbinolicus).